The sequence spans 187 residues: Lysozyme 3 (187 aa).

The N-terminal stretch at 1–18 is a signal peptide; sequence MNGLFLFCVATTAALAYG. In terms of domain architecture, I-type lysozyme spans 68 to 183; it reads TGIVSQQCLQ…WSHVHAQGCS (116 aa). Disulfide bonds link cysteine 75–cysteine 151, cysteine 80–cysteine 86, cysteine 91–cysteine 100, cysteine 113–cysteine 133, cysteine 123–cysteine 129, and cysteine 147–cysteine 165. Glutamate 83 serves as the catalytic Proton donor. Residue aspartate 94 is the Nucleophile of the active site. Residue 106–112 participates in substrate binding; it reads KEGYWHD. Substrate is bound by residues tyrosine 137 and 158–160; that span reads HNG.

As to expression, highest levels of expression detected in the digestive glands. Lower levels in the mantle, labial palps, gills and style-midgut sac, and lowest levels detected in the hemocytes. Not detected in the gonads.

It is found in the secreted. It catalyses the reaction Hydrolysis of (1-&gt;4)-beta-linkages between N-acetylmuramic acid and N-acetyl-D-glucosamine residues in a peptidoglycan and between N-acetyl-D-glucosamine residues in chitodextrins.. In terms of biological role, has antibacterial activity against the Gram-negative bacterium E.coli. No antibacterial activity detected against the Gram-negative bacterium V.vulnificus. This chain is Lysozyme 3, found in Crassostrea virginica (Eastern oyster).